The primary structure comprises 88 residues: Conotoxin tx9a (88 aa).

The signal sequence occupies residues 1-27; sequence MHLSLARSAVLMLLLLFALGNFVVVQS. The propeptide occupies 28-58; the sequence is GQITRDVDNGQLTDNRRNLQSKWKPVSLYMS. Intrachain disulfides connect C62-C76, C66-C78, and C72-C83. 2 positions are modified to 4-carboxyglutamate; partial: E68 and E73. N87 carries the asparagine amide modification.

In terms of processing, exists in 4 different forms, depending on gamma-carboxyglutamations. Tx9a-EE does not contain gamma-carboxyglutamate, tx9a-E/gamma has one gamma-carboxyglutamate at position 73, tx9a-gamma/E has one gamma-carboxyglutamate at position 68, and tx9a-agmma/gamma has two gamma-carboxyglutamates at positions 68 and 73. Expressed by the venom duct. All different gamma-carboxyalted forms are mostly present in part 2, part 3 and part 4 of the venom duct. They are also found in part 1 (proximal part near the venom bulb) and part 5, but in lower quantity.

It localises to the secreted. Neurotoxin. In vivo, intracranial injection into mice of 10 pmol/g of the peptide induces running in circles and hyperactivity. At higher doses (50 pmol/g), the mice exhibit running and climbing symptoms for close to one hour. Between 130 and 150 pmol/g, characteristic 'spasmodic' symptomatology is elicited. A hand clap would make mice jump high and start running rapidly. When exposed to a loud hand clap, or if the cage cover were dropped, the mice lose motor control and exhibit seizure-like symptoms from which they eventually recover. At the highest doses tested (over 250 pmol/g), after the characteristic spasmodic symptomatology, lethality occurs. Injection of a similar dose range intramuscularly into Siamese fighting fish elicited no unusual symptomatology. This chain is Conotoxin tx9a, found in Conus textile (Cloth-of-gold cone).